A 315-amino-acid polypeptide reads, in one-letter code: Ribosomal RNA small subunit methyltransferase H (315 aa).

S-adenosyl-L-methionine-binding positions include 37 to 39 (GGH), D57, F83, D105, and Q112.

The protein belongs to the methyltransferase superfamily. RsmH family.

The protein resides in the cytoplasm. It catalyses the reaction cytidine(1402) in 16S rRNA + S-adenosyl-L-methionine = N(4)-methylcytidine(1402) in 16S rRNA + S-adenosyl-L-homocysteine + H(+). Its function is as follows. Specifically methylates the N4 position of cytidine in position 1402 (C1402) of 16S rRNA. The chain is Ribosomal RNA small subunit methyltransferase H from Pseudomonas fluorescens (strain Pf0-1).